The primary structure comprises 357 residues: Sorbitol dehydrogenase (357 aa).

At Ala-2 the chain carries N-acetylalanine. Residue Cys-45 coordinates Zn(2+). Tyr-51 is a binding site for substrate. Positions 70 and 71 each coordinate Zn(2+). Glu-156 serves as a coordination point for substrate. NAD(+)-binding residues include Ile-184, Asp-204, and Arg-209. Phosphoserine is present on residues Ser-211 and Ser-225. NAD(+)-binding positions include Val-273–Leu-275 and Val-297–Arg-299. Arg-299 and Tyr-300 together coordinate substrate.

This sequence belongs to the zinc-containing alcohol dehydrogenase family. In terms of assembly, homotetramer. Zn(2+) serves as cofactor.

It localises to the mitochondrion membrane. The protein localises to the cell projection. The protein resides in the cilium. It is found in the flagellum. It carries out the reaction xylitol + NAD(+) = D-xylulose + NADH + H(+). It catalyses the reaction L-iditol + NAD(+) = keto-L-sorbose + NADH + H(+). The catalysed reaction is keto-D-fructose + NADH + H(+) = D-sorbitol + NAD(+). In terms of biological role, polyol dehydrogenase that catalyzes the reversible NAD(+)-dependent oxidation of various sugar alcohols. Is active with xylitol, L-iditol and D-sorbitol (D-glucitol) as substrates, leading to the C2-oxidized products D-xylulose, L-sorbose and D-fructose, respectively. Is a key enzyme in the polyol pathway that interconverts glucose and fructose via sorbitol, which constitutes an important alternate route for glucose metabolism. May play a role in sperm motility by using sorbitol as an alternative energy source for sperm motility. The sequence is that of Sorbitol dehydrogenase (SORD) from Pongo abelii (Sumatran orangutan).